Here is a 1226-residue protein sequence, read N- to C-terminus: MSCAATLSSAKDSTNANASGGGGGGGGGGAPTNSNTNTNTNTQSTAVGVVVSSAAGTGVGVGGGGGGGGSLPGGTTSSSSASAAGGVAAGGGGNSAAALVRRFSMEGVGARVIRGPDWKWNKQDGGEGHVGTVRNFESAEEVVVVWDNGTAANYRCAGAYDLRILDSAPTGVKHEGTMCDTCRQQPIFGIRWKCAECINYDLCSICYHGDKHHLRHRFYRITTPGGERTMLEPRRKSKKVLARGIFPGARVVRGVDWQWEDQDGGVGRRGKVNEIQDWSSASPRSAAYVIWDNGSKNLYRVGFEGMADLKVVNDAKGSNVYRDHLPLLGENGPGKGPHGFQIGDKVTVDLDLEIVQSLQHGHGGWTDGMFECLSNAGMVVGIDEDHDIVVAYNSGNRWTFNPAVLTKVSSPTTAPPEFQVGDIVKICSDVESIKILQRGHGEWADAMQLTLGKIGRVQQVYHDNDLKVEVGNTSWTYNPLAVCKVASSTASDGSCAPVIPSSERLSAILKKLFEPNVSGDATEEFVKAAANGFAARCEEYLAGAAQPSTSSASPSSGPDVNVNGVFAGHTALQAASQNGHIEVIQVLLRHAVDVEIEDKDGDRAVHHAAFGDEAAVIEILAKAGADLNARNKRRQTSLHIAVNKGHLNVVKTLLTLGCHPSLQDSEGDTPLHDAISKEHDEMLSLLLDFGADITLNNNNGFNALHHAALKGNPSAMKILLTKTNRPWIVEEKKDDGYTALHLAALNNHVEIAELLVHMGKANMDRQNVNLQTALHLAVERQHVQIVKLLVQDGADLNIPDKDGDTPLHEALRHHTLSQLKQLQDVEGFGKLLMGLRNANNKKASASIACFLAANGADLTLKNRKQQTPLDLCPDPNLCKTLVKCYNERKTDDSELPGNVAGTSSSARARAASGSLNQSSSVNMPLSSLAASSTFPAASSSSIFALNGIANEMSQSLHEDPPKSSASLDECLVCSDAKRDTVFKPCGHVSCCETCAPRVKKCLICRETVSSREKIDECLVCSDRRAAVFFRPCGHMVACEHCSALMKKCVLCRTQIDEILSFSLCCGGSGRPEKVSVAAGAMATVGLPLPDDRFMEAAAAAACANASGHSVAMNNTVVTPVAGSSNQLNSQNNLLAAAAASSNVSNLSAAGNAMVAPSNVNNFQMDDVQKLKQQLQDIKEQTMCPVCFDRIKNMVFLCGHGTCQMCGDQIEGCPICRKTVEKRILLF.

Residues 1-12 (MSCAATLSSAKD) are compositionally biased toward polar residues. Disordered regions lie at residues 1 to 42 (MSCA…NTNT) and 66 to 87 (GGGG…AGGV). Residues 19–30 (SGGGGGGGGGGA) are compositionally biased toward gly residues. Composition is skewed to low complexity over residues 31 to 42 (PTNSNTNTNTNT) and 73 to 86 (GGTT…AAGG). Positions 100 to 168 (VRRFSMEGVG…AYDLRILDSA (69 aa)) constitute an MIB/HERC2 1 domain. The ZZ-type zinc finger occupies 174 to 226 (HEGTMCDTCRQQPIFGIRWKCAECINYDLCSICYHGDKHHLRHRFYRITTPGG). C179, C182, C194, C197, C203, C206, H212, and H216 together coordinate Zn(2+). The 79-residue stretch at 237 to 315 (SKKVLARGIF…MADLKVVNDA (79 aa)) folds into the MIB/HERC2 2 domain. ANK repeat units follow at residues 567-596 (AGHT…DVEI), 600-629 (DGDR…DLNA), 633-662 (RRQT…HPSL), 666-695 (EGDT…DITL), 699-731 (NGFN…IVEE), 735-765 (DGYT…NMDR), 769-798 (NLQT…DLNI), and 802-833 (DGDT…KLLM). The interval 890-919 (TDDSELPGNVAGTSSSARARAASGSLNQSS) is disordered. Low complexity predominate over residues 900 to 914 (AGTSSSARARAASGS). 2 consecutive RING-type zinc fingers follow at residues 970 to 1005 (CLVC…LICR) and 1017 to 1052 (CLVC…VLCR). Residues 1159-1181 (VNNFQMDDVQKLKQQLQDIKEQT) are a coiled coil. Residues 1183–1216 (CPVCFDRIKNMVFLCGHGTCQMCGDQIEGCPICR) form an RING-type 3 zinc finger.

Interacts with intracellular domain of Dl and Ser. As to expression, ubiquitous in the wing imaginal disk (at protein level).

The protein localises to the cytoplasm. It is found in the cell cortex. The catalysed reaction is S-ubiquitinyl-[E2 ubiquitin-conjugating enzyme]-L-cysteine + [acceptor protein]-L-lysine = [E2 ubiquitin-conjugating enzyme]-L-cysteine + N(6)-ubiquitinyl-[acceptor protein]-L-lysine.. Its pathway is protein modification; protein ubiquitination. Functionally, E3 ubiquitin-protein ligase that mediates ubiquitination of Delta (Dl) and Serrate (Ser) receptors, which act as ligands of Notch proteins. Positively regulates the Notch signaling by ubiquitinating the intracellular domain of Dl and Ser, leading to endocytosis of Dl and Ser receptors. Regulates a subset of Notch signaling events, including wing margin specification, leg segmentation and vein determination, that are distinct from those events requiring neuralize (neur) activity. Also modulates lateral inhibition, a neur- and Dl-dependent signaling event, suggesting a distinct but partially complementary function with neur. The protein is E3 ubiquitin-protein ligase mind-bomb (mib1) of Drosophila melanogaster (Fruit fly).